Reading from the N-terminus, the 144-residue chain is 6-pyruvoyl tetrahydrobiopterin synthase (144 aa).

Positions Met-1–Ala-4 are excised as a propeptide. Ser-18 carries the post-translational modification Phosphoserine. His-23 serves as a coordination point for Zn(2+). Ser-27 is subject to Phosphoserine. Cys-42 functions as the Proton acceptor in the catalytic mechanism. Residues His-48 and His-50 each coordinate Zn(2+). Residue His-89 is the Charge relay system of the active site. Residue Tyr-127 is modified to Phosphotyrosine. Glu-133 (charge relay system) is an active-site residue.

Belongs to the PTPS family. In terms of assembly, homohexamer formed of two homotrimers in a head to head fashion. Zn(2+) serves as cofactor. In terms of processing, phosphorylation of Ser-18 is required for maximal enzyme activity.

The catalysed reaction is 7,8-dihydroneopterin 3'-triphosphate = 6-pyruvoyl-5,6,7,8-tetrahydropterin + triphosphate + H(+). The protein operates within cofactor biosynthesis; tetrahydrobiopterin biosynthesis; tetrahydrobiopterin from 7,8-dihydroneopterin triphosphate: step 1/3. Involved in the biosynthesis of tetrahydrobiopterin, an essential cofactor of aromatic amino acid hydroxylases. Catalyzes the transformation of 7,8-dihydroneopterin triphosphate into 6-pyruvoyl tetrahydropterin. The polypeptide is 6-pyruvoyl tetrahydrobiopterin synthase (Pts) (Rattus norvegicus (Rat)).